Reading from the N-terminus, the 151-residue chain is Large ribosomal subunit protein bL9 (151 aa).

The protein belongs to the bacterial ribosomal protein bL9 family.

Its function is as follows. Binds to the 23S rRNA. This Chlorobium luteolum (strain DSM 273 / BCRC 81028 / 2530) (Pelodictyon luteolum) protein is Large ribosomal subunit protein bL9.